The chain runs to 1524 residues: Protein dispatched homolog 1 (1524 aa).

Asn-59 is a glycosylation site (N-linked (GlcNAc...) asparagine). Transmembrane regions (helical) follow at residues 190–210, 500–520, 525–545, and 549–569; these read VVVL…GVLV, LLMD…VMCV, MFIT…SYFL, and VFHF…LVGI. One can recognise an SSD domain in the interval 486–658; the sequence is GIEFGIKHSL…VTWLPAVVVL (173 aa). Asn-582 is a glycosylation site (N-linked (GlcNAc...) asparagine). The next 8 membrane-spanning stretches (helical) occupy residues 604-624, 638-658, 719-739, 988-1008, 1010-1030, 1040-1060, 1079-1099, and 1107-1127; these read AALS…ANYV, GTAI…VVVL, YLWL…VCIN, MGLS…NIII, LYAI…LVLL, VTIS…GVAY, VGSA…MMMP, and QLGT…TFFF.

Belongs to the dispatched family. As to quaternary structure, interacts with SHH via the cholesterol anchor of the dually lipid-modified SHH (ShhNp).

It is found in the membrane. In terms of biological role, functions in hedgehog (Hh) signaling. Regulates the release and extracellular accumulation of cholesterol-modified hedgehog proteins and is hence required for effective production of the Hh signal. Synergizes with SCUBE2 to cause an increase in SHH secretion. The protein is Protein dispatched homolog 1 (DISP1) of Homo sapiens (Human).